The chain runs to 144 residues: IgW chain C region, secreted form 1/3 (144 aa).

In terms of domain architecture, Ig-like spans 1-82 (VYNQTTAVLG…AGSRFNDRIS (82 aa)). Residues N3, N43, and N123 are each glycosylated (N-linked (GlcNAc...) asparagine). A disulfide bridge links C11 with C68. A secretory tail region spans residues 87 to 144 (KGGTINLPVPGGNTPCTCPPCSCSGCMPKLVYQTDLNVTLENGGQLQYNCHQQACKIK).

Expressed mainly in lymphoid tissues including spleen, epigonal organ and circulating lymphocytes.

It localises to the secreted. This Heterodontus francisci (Horn shark) protein is IgW chain C region, secreted form 1/3.